The sequence spans 222 residues: Glutathione S-transferase A6 (222 aa).

The 81-residue stretch at 3–83 folds into the GST N-terminal domain; it reads EKPLFHYDEA…YFSSKYNLYG (81 aa). Residues Y9, R45, 54-55, and 67-68 contribute to the glutathione site; these read QV and QT. The 124-residue stretch at 85–208 folds into the GST C-terminal domain; the sequence is DMKERALIDM…QPGSQRQPPV (124 aa).

This sequence belongs to the GST superfamily. Alpha family. As to quaternary structure, homodimer or heterodimer of GSTA1 and GSTA2.

It localises to the cytoplasm. The catalysed reaction is RX + glutathione = an S-substituted glutathione + a halide anion + H(+). Functionally, conjugation of reduced glutathione to a wide number of exogenous and endogenous hydrophobic electrophiles. The sequence is that of Glutathione S-transferase A6 (Gsta6) from Rattus norvegicus (Rat).